We begin with the raw amino-acid sequence, 152 residues long: Calmodulin-like protein 2 (152 aa).

4 consecutive EF-hand domains span residues 1 to 36 (MDRG…VGIM), 37 to 72 (VPEN…MVEE), 74 to 109 (EEEE…MGLK), and 112 to 147 (RTLE…GGFA). Ca(2+)-binding residues include D14, N16, D18, K20, E25, D50, N52, D54, E61, D87, N89, D91, E98, D125, D127, D129, M131, and E136.

The protein belongs to the calmodulin family.

In terms of biological role, potential calcium sensor that is required for pollen tube attraction for ovule fertilization. This chain is Calmodulin-like protein 2 (CML2), found in Arabidopsis thaliana (Mouse-ear cress).